The primary structure comprises 305 residues: Mitochondrial citrate transporter D (305 aa).

Solcar repeat units follow at residues 10 to 101 (LPFG…WGAF), 111 to 197 (QTQS…VRAQ), and 211 to 298 (RNDL…VMDF). 6 consecutive transmembrane segments (helical) span residues 16–36 (FIAGAVAGVSEILVMYPLDVV), 78–98 (SAPILMEAPKRATKFAANDSW), 118–137 (LTGATAGATESFVVVPFELV), 176–196 (TLWRHILWNSGYFGCIFQVRA), 208–228 (QQTRNDLIAGTIGGTAGTILN), and 270–291 (LYKGFLPKVLRLGPGGGILLVV).

This sequence belongs to the mitochondrial carrier (TC 2.A.29) family.

Its subcellular location is the mitochondrion inner membrane. It carries out the reaction citrate(in) + H(+)(in) = citrate(out) + H(+)(out). Its function is as follows. Mitochondrial transporter that mediates citrate export from mitochondria to cytoplasm. Both ctpA, ctpB, and ctpD play important roles in citric acid transport across the mitochondrial membrane and function in a redundant manner. The sequence is that of Mitochondrial citrate transporter D from Aspergillus niger (strain ATCC 1015 / CBS 113.46 / FGSC A1144 / LSHB Ac4 / NCTC 3858a / NRRL 328 / USDA 3528.7).